Consider the following 63-residue polypeptide: Large ribosomal subunit protein bL35 (63 aa).

This sequence belongs to the bacterial ribosomal protein bL35 family.

The chain is Large ribosomal subunit protein bL35 from Thermobifida fusca (strain YX).